A 439-amino-acid chain; its full sequence is Histidinol dehydrogenase (439 aa).

NAD(+) is bound by residues Tyr125, Gln187, and Asn210. Residues Thr233, Gln255, and His258 each coordinate substrate. Residues Gln255 and His258 each coordinate Zn(2+). Residues Glu323 and His324 each act as proton acceptor in the active site. Substrate-binding residues include His324, Asp357, Glu411, and His416. Asp357 contacts Zn(2+). His416 lines the Zn(2+) pocket.

The protein belongs to the histidinol dehydrogenase family. The cofactor is Zn(2+).

It carries out the reaction L-histidinol + 2 NAD(+) + H2O = L-histidine + 2 NADH + 3 H(+). It functions in the pathway amino-acid biosynthesis; L-histidine biosynthesis; L-histidine from 5-phospho-alpha-D-ribose 1-diphosphate: step 9/9. Catalyzes the sequential NAD-dependent oxidations of L-histidinol to L-histidinaldehyde and then to L-histidine. This chain is Histidinol dehydrogenase, found in Symbiobacterium thermophilum (strain DSM 24528 / JCM 14929 / IAM 14863 / T).